We begin with the raw amino-acid sequence, 173 residues long: Inorganic pyrophosphatase (173 aa).

The substrate site is built by lysine 29, arginine 43, and tyrosine 55. Residues aspartate 65, aspartate 70, and aspartate 102 each contribute to the Mg(2+) site. A substrate-binding site is contributed by tyrosine 141.

The protein belongs to the PPase family. As to quaternary structure, homohexamer. The cofactor is Mg(2+).

It is found in the cytoplasm. The catalysed reaction is diphosphate + H2O = 2 phosphate + H(+). Functionally, catalyzes the hydrolysis of inorganic pyrophosphate (PPi) forming two phosphate ions. The protein is Inorganic pyrophosphatase of Rickettsia felis (strain ATCC VR-1525 / URRWXCal2) (Rickettsia azadi).